The primary structure comprises 162 residues: Caveolin-2 (162 aa).

Over 1–86 the chain is Cytoplasmic; that stretch reads MGLETEKADV…FEISKYVMYK (86 aa). Tyr-19 bears the Phosphotyrosine; by SRC mark. 2 positions are modified to phosphoserine: Ser-20 and Ser-23. Tyr-27 bears the Phosphotyrosine; by SRC mark. Residue Ser-36 is modified to Phosphoserine. The helical intramembrane region spans 87–107; the sequence is FLTVFLAIPLAFLAGILFATL. Topologically, residues 108 to 162 are cytoplasmic; that stretch reads SCLHIWIIMPFVKTCLMVLPSVQTIWKSVTDAIIAPLCTSIGRSFSSVSLQLSQD.

It belongs to the caveolin family. Monomer or homodimer. Interacts with CAV1; the interaction forms a stable heterooligomeric complex that is required for targeting to lipid rafts and for caveolae formation. Tyrosine phosphorylated forms do not form heterooligomers with the Tyr-19-phosphorylated form existing as a monomer or dimer, and the Tyr-27-form as a monomer only. Interacts (tyrosine phosphorylated form) with the SH2 domain-containing proteins, RASA1, NCK1 and SRC. Interacts (tyrosine phosphorylated form) with INSR, the interaction (Tyr-27-phosphorylated form) is increased on insulin stimulation. Interacts (Tyr-19 phosphorylated form) with MAPK1 (phosphorylated form); the interaction, promoted by insulin, leads to nuclear location and MAPK1 activation. Interacts with STAT3; the interaction is increased on insulin-induced tyrosine phosphorylation leading to STAT activation. Phosphorylated on serine and tyrosine residues. CAV1 promotes phosphorylation on Ser-23 which then targets the complex to the plasma membrane, lipid rafts and caveolae. Phosphorylation on Ser-36 appears to modulate mitosis in endothelial cells. Phosphorylation on both Tyr-19 and Tyr-27 is required for insulin-induced 'Ser-727' phosphorylation of STAT3 and its activation. Phosphorylation on Tyr-19 is required for insulin-induced phosphorylation of MAPK1 and DNA binding of STAT3. Tyrosine phosphorylation is induced by both EGF and insulin (By. similarity).

The protein resides in the nucleus. It localises to the cytoplasm. It is found in the golgi apparatus membrane. Its subcellular location is the cell membrane. The protein localises to the membrane. The protein resides in the caveola. Functionally, may act as a scaffolding protein within caveolar membranes. Interacts directly with G-protein alpha subunits and can functionally regulate their activity. Acts as an accessory protein in conjunction with CAV1 in targeting to lipid rafts and driving caveolae formation. The Ser-36 phosphorylated form has a role in modulating mitosis in endothelial cells. Positive regulator of cellular mitogenesis of the MAPK signaling pathway. Required for the insulin-stimulated nuclear translocation and activation of MAPK1 and STAT3, and the subsequent regulation of cell cycle progression. The protein is Caveolin-2 (CAV2) of Callithrix jacchus (White-tufted-ear marmoset).